Consider the following 179-residue polypeptide: Small ribosomal subunit protein uS5 (179 aa).

The S5 DRBM domain maps to 13–76 (LDERVVLINR…EAAKRNLIRV (64 aa)). A disordered region spans residues 160–179 (DMTPQELNARRMRRETTEAA).

Belongs to the universal ribosomal protein uS5 family. In terms of assembly, part of the 30S ribosomal subunit. Contacts proteins S4 and S8.

Functionally, with S4 and S12 plays an important role in translational accuracy. In terms of biological role, located at the back of the 30S subunit body where it stabilizes the conformation of the head with respect to the body. The protein is Small ribosomal subunit protein uS5 of Chloroflexus aggregans (strain MD-66 / DSM 9485).